We begin with the raw amino-acid sequence, 541 residues long: Protein wntless homolog (541 aa).

Residues 1–15 lie on the Cytoplasmic side of the membrane; that stretch reads MAGAIIENMSTKKLC. A helical transmembrane segment spans residues 16-36; the sequence is IVGGILLVFQIVAFLVGGLIA. The Lumenal segment spans residues 37–232; sequence PAPTTAVSYV…GIHQNGGFTK (196 aa). The interval 101 to 202 is interaction with Wnt proteins; sequence MEMSPWFQFM…KYYLLNIRLP (102 aa). The helical transmembrane segment at 233-253 threads the bilayer; it reads VWFAMKTFLTPSIFIIMVWYW. Over 254–268 the chain is Cytoplasmic; that stretch reads RRITMMSRPPVLLEK. A helical membrane pass occupies residues 269–289; sequence VIFALGISMTFINIPVEWFSI. Over 290-303 the chain is Lumenal; that stretch reads GFDWTWMLLFGDIR. The helical transmembrane segment at 304–324 threads the bilayer; that stretch reads QGIFYAMLLSFWIIFCGEHMM. The Cytoplasmic segment spans residues 325 to 331; that stretch reads DQHERNH. The helical transmembrane segment at 332 to 352 threads the bilayer; that stretch reads IAGYWKQVGPIAVGSFCLFIF. Residues 353–380 are Lumenal-facing; the sequence is DMCERGVQLTNPFYSIWTTDVGTELAMA. Residues 381-401 form a helical membrane-spanning segment; that stretch reads FIIVAGICLCLYFLFLCFMVF. Residues 402–431 are Cytoplasmic-facing; the sequence is QVFRNISGKQSSLPAMSKVRRLHYEGLIFR. Residues 432-452 traverse the membrane as a helical segment; that stretch reads FKFLMLITLACAAMTVIFFIV. Topologically, residues 453 to 471 are lumenal; sequence SQVTEGHWKWGGVTVQVSS. A helical transmembrane segment spans residues 472 to 492; sequence AFFTGIYGMWNLYVFALMFLY. Residues 493-541 are Cytoplasmic-facing; it reads APSHKNYGEDQSNGDLGVHSGEELQLTTTITHVDGPTEIYKLTRKEAQE.

Belongs to the wntless family. In terms of assembly, interacts with WNT3A. Interacts with WNT1, WNT3 and WNT5A. Post-translationally, N-glycosylated. In terms of tissue distribution, expressed in the brain, skeletal muscle, heart muscle, lung, gut, liver, and kidney (at protein level). In the brain, expressed in the cortex, striatum, ventral tegmentum, nucleus accumbens and to a lesser extent in the Purkinjie cells in the cerebellum. Expressed in eye iridocorneal angle.

The protein resides in the golgi apparatus membrane. It localises to the cytoplasmic vesicle membrane. It is found in the cell membrane. The protein localises to the endoplasmic reticulum membrane. Its subcellular location is the early endosome membrane. In terms of biological role, regulates Wnt proteins sorting and secretion in a feedback regulatory mechanism. This reciprocal interaction plays a key role in the regulation of expression, subcellular location, binding and organelle-specific association of Wnt proteins. Also plays an important role in establishment of the anterior-posterior body axis formation during development. This is Protein wntless homolog (Wls) from Rattus norvegicus (Rat).